The chain runs to 686 residues: Putative cuticle collagen 99 (686 aa).

Disordered stretches follow at residues 42 to 79 (PPIGNSDDNSDDVAKSRKVRNSCMCPPGPPGERGPVGP) and 163 to 444 (GPIG…SLVA). Residues 67-79 (PPGPPGERGPVGP) show a composition bias toward pro residues. Triple-helical region regions lie at residues 142–201 (GMPG…KGDR), 230–263 (GPPGPPGPPGPPGPAGRDGRHGMKGDRGLPGFDG), and 268–296 (GPKGETGNPGRDGIPGARGPPGERGEKGD). Residues 231 to 243 (PPGPPGPPGPPGP) show a composition bias toward pro residues. Basic and acidic residues predominate over residues 246–256 (RDGRHGMKGDR). The segment covering 306 to 318 (GQSVSTVSSSGSQ) has biased composition (low complexity). 2 stretches are compositionally biased toward basic and acidic residues: residues 361–373 (EKGERGERGETGD) and 401–417 (RDGRPGEKGEKGEHGLR). The triple-helical region stretch occupies residues 394–439 (GPPGPPGRDGRPGEKGEKGEHGLRGDMGLPGPEGTPGKRGRRGRHG). N-linked (GlcNAc...) asparagine glycosylation is found at Asn-446 and Asn-535. The interval 475 to 650 (KNVIPGPPGP…TGPDGLPLPY (176 aa)) is disordered. Triple-helical region stretches follow at residues 479–536 (PGPP…SGNQ), 538–576 (GPRGPPGLPGPPGEKGDLGPPGLPGQPGALGLPGHPGPM), and 577–636 (GLRG…PGLD). A compositionally biased stretch (pro residues) spans 540–549 (RGPPGLPGPP). Low complexity predominate over residues 563-581 (QPGALGLPGHPGPMGLRGP).

Belongs to the cuticular collagen family. As to quaternary structure, collagen polypeptide chains are complexed within the cuticle by disulfide bonds and other types of covalent cross-links.

Functionally, nematode cuticles are composed largely of collagen-like proteins. The cuticle functions both as an exoskeleton and as a barrier to protect the worm from its environment. The polypeptide is Putative cuticle collagen 99 (Caenorhabditis briggsae).